The primary structure comprises 518 residues: Membrane-bound lytic murein transglycosylase F (518 aa).

The signal sequence occupies residues Met1–Ala21. Positions Leu22–Gly269 are non-LT domain. Residues Asp270–Asn518 are LT domain. Residue Glu314 is part of the active site.

In the N-terminal section; belongs to the bacterial solute-binding protein 3 family. It in the C-terminal section; belongs to the transglycosylase Slt family.

It is found in the cell outer membrane. The enzyme catalyses Exolytic cleavage of the (1-&gt;4)-beta-glycosidic linkage between N-acetylmuramic acid (MurNAc) and N-acetylglucosamine (GlcNAc) residues in peptidoglycan, from either the reducing or the non-reducing ends of the peptidoglycan chains, with concomitant formation of a 1,6-anhydrobond in the MurNAc residue.. In terms of biological role, murein-degrading enzyme that degrades murein glycan strands and insoluble, high-molecular weight murein sacculi, with the concomitant formation of a 1,6-anhydromuramoyl product. Lytic transglycosylases (LTs) play an integral role in the metabolism of the peptidoglycan (PG) sacculus. Their lytic action creates space within the PG sacculus to allow for its expansion as well as for the insertion of various structures such as secretion systems and flagella. In Escherichia coli O157:H7, this protein is Membrane-bound lytic murein transglycosylase F.